A 316-amino-acid polypeptide reads, in one-letter code: Delta(1)-pyrroline-2-carboxylate reductase (316 aa).

The protein belongs to the ornithine cyclodeaminase/mu-crystallin family.

It carries out the reaction L-proline + NAD(+) = 1-pyrroline-2-carboxylate + NADH + H(+). It catalyses the reaction L-proline + NADP(+) = 1-pyrroline-2-carboxylate + NADPH + H(+). Catalyzes the reduction of Delta(1)-pyrroline-2-carboxylate (Pyr2C) to L-proline, using preferentially NADPH over NADH as the electron donor. Is likely involved in a degradation pathway that converts trans-3-hydroxy-L-proline (t3LHyp) to L-proline, which would allow P.denitrificans to grow on t3LHyp as a sole carbon source. This chain is Delta(1)-pyrroline-2-carboxylate reductase, found in Paracoccus denitrificans (strain Pd 1222).